Reading from the N-terminus, the 140-residue chain is Nucleoside diphosphate kinase (140 aa).

Positions 9, 57, 85, 91, 102, and 112 each coordinate ATP. The active-site Pros-phosphohistidine intermediate is the His-115.

The protein belongs to the NDK family. As to quaternary structure, homotetramer. The cofactor is Mg(2+).

Its subcellular location is the cytoplasm. The enzyme catalyses a 2'-deoxyribonucleoside 5'-diphosphate + ATP = a 2'-deoxyribonucleoside 5'-triphosphate + ADP. The catalysed reaction is a ribonucleoside 5'-diphosphate + ATP = a ribonucleoside 5'-triphosphate + ADP. Functionally, major role in the synthesis of nucleoside triphosphates other than ATP. The ATP gamma phosphate is transferred to the NDP beta phosphate via a ping-pong mechanism, using a phosphorylated active-site intermediate. The protein is Nucleoside diphosphate kinase of Chlorobium chlorochromatii (strain CaD3).